Reading from the N-terminus, the 879-residue chain is Beta-alanyl-bioamine nonribosomal peptide synthetase ebony (879 aa).

An adenylation region spans residues F26–K540. A Carrier domain is found at E573–H650. The residue at position 611 (S611) is an O-(pantetheine 4'-phosphoryl)serine. Residues L666–Q679 are condensation. E696 contributes to the dopamine binding site. E696 is a histamine binding site. Beta-alanine is bound by residues T825 and N827.

The protein belongs to the NRP synthetase family. It depends on pantetheine 4'-phosphate as a cofactor. Mg(2+) is required as a cofactor. In terms of tissue distribution, expressed in the optic neuropils in the lamina and in distinct cells at the distal border of the medulla cortex (at protein level). Expressed in the protocerebrum and thoracic ganglia (at protein level). Expressed in antennal lobes, antennal nerves and subesophagic ganglion (at protein level). Specifically, expressed in epithelial glial cells of the medulla that surround the synaptic cleft of photoreceptor axonal endings (at protein level). Expressed in some cells in the cuticle.

The protein localises to the cytoplasm. It carries out the reaction histamine + beta-alanine + ATP = carcinine + AMP + diphosphate + H(+). The catalysed reaction is beta-alanine + ATP + H(+) = beta-alanyl-5'-AMP + diphosphate. The enzyme catalyses beta-alanyl-5'-AMP + holo-[peptidyl-carrier protein] = beta-alanyl-[peptidyl-carrier protein] + AMP + H(+). It catalyses the reaction beta-alanyl-[peptidyl-carrier protein] + histamine = carcinine + holo-[peptidyl-carrier protein] + H(+). It carries out the reaction dopamine + beta-alanine + ATP = beta-alanyl-dopamine + AMP + diphosphate + H(+). The catalysed reaction is beta-alanyl-[peptidyl-carrier protein] + dopamine = beta-alanyl-dopamine + holo-[peptidyl-carrier protein] + H(+). Its function is as follows. Nonribosomal peptide synthase which is required for the regulation of histamine and dopamine levels in various tissues through their condensation with beta-alanine. In epithelial glial cells, plays an essential role in the inactivation of histamine, the main neurotransmitter in the optical nerve system, by catalyzing the conversion of histamine into carcinine. In the cuticle, catalyzes the condensation of beta-alanine with dopamine to form beta-alanyl-dopamine (NBAD), a metabolite involved in the pigmentation and sclerotization of the insect cuticle. Also, regulates the cuticular hydrocarbon composition in females. Acts downstream of the body clock to regulate circadian behavioral rhythms. Can also condense beta-alanine with biogenic amines tyramine, octopamine, and serotonin in vitro. The polypeptide is Beta-alanyl-bioamine nonribosomal peptide synthetase ebony (Drosophila melanogaster (Fruit fly)).